The following is a 170-amino-acid chain: Small ribosomal subunit protein bS18c (170 aa).

Disordered stretches follow at residues 1–59 (MYIS…IGPG) and 151–170 (NLRNSNQNLRNNNRNLSSDC). 7 repeats span residues 4–10 (SKQPFRK), 11–17 (SKQPFRK), 18–24 (SKQTFHK), 25–31 (SKQPFRK), 32–38 (FKQPFRK), 39–45 (SKQPFRK), and 46–52 (SKQPFRR). The segment at 4 to 52 (SKQPFRKSKQPFRKSKQTFHKSKQPFRKFKQPFRKSKQPFRKSKQPFRR) is 7 X 7 AA tandem repeats. The span at 7 to 55 (PFRKSKQPFRKSKQTFHKSKQPFRKFKQPFRKSKQPFRKSKQPFRRRSR) shows a compositional bias: basic residues.

The protein belongs to the bacterial ribosomal protein bS18 family. As to quaternary structure, part of the 30S ribosomal subunit.

The protein resides in the plastid. It is found in the chloroplast. This Zea mays (Maize) protein is Small ribosomal subunit protein bS18c (rps18).